The primary structure comprises 147 residues: Large-conductance mechanosensitive channel (147 aa).

The next 2 membrane-spanning stretches (helical) occupy residues 8-28 and 81-101; these read FIMK…AAFG and GIFL…FMII.

The protein belongs to the MscL family. Homopentamer.

Its subcellular location is the cell inner membrane. Its function is as follows. Channel that opens in response to stretch forces in the membrane lipid bilayer. May participate in the regulation of osmotic pressure changes within the cell. The polypeptide is Large-conductance mechanosensitive channel (Trichlorobacter lovleyi (strain ATCC BAA-1151 / DSM 17278 / SZ) (Geobacter lovleyi)).